The chain runs to 644 residues: Beta-mannosyltransferase 2 (644 aa).

Residues 1–6 are Cytoplasmic-facing; that stretch reads MRTRLN. Residues 7-27 form a helical membrane-spanning segment; it reads FLLLCIASVLSVIWIGVLLTW. Topologically, residues 28–644 are extracellular; sequence NDNNLGGISL…NDKKDLKIRQ (617 aa). An N-linked (GlcNAc...) asparagine glycan is attached at asparagine 484. The stretch at 512 to 644 forms a coiled coil; sequence TRGEAERRRR…NDKKDLKIRQ (133 aa). A disordered region spans residues 517–644; that stretch reads ERRRRVAEER…NDKKDLKIRQ (128 aa).

The protein belongs to the BMT family.

The protein resides in the membrane. Functionally, beta-mannosyltransferase involved in cell wall biosynthesis. Initiates the beta-mannosylation of core N-linked glycans. The protein is Beta-mannosyltransferase 2 (BMT2) of Komagataella phaffii (strain GS115 / ATCC 20864) (Yeast).